The sequence spans 200 residues: 3-isopropylmalate dehydratase small subunit (200 aa).

This sequence belongs to the LeuD family. LeuD type 1 subfamily. In terms of assembly, heterodimer of LeuC and LeuD.

It carries out the reaction (2R,3S)-3-isopropylmalate = (2S)-2-isopropylmalate. The protein operates within amino-acid biosynthesis; L-leucine biosynthesis; L-leucine from 3-methyl-2-oxobutanoate: step 2/4. In terms of biological role, catalyzes the isomerization between 2-isopropylmalate and 3-isopropylmalate, via the formation of 2-isopropylmaleate. The polypeptide is 3-isopropylmalate dehydratase small subunit (Actinobacillus pleuropneumoniae serotype 3 (strain JL03)).